A 246-amino-acid polypeptide reads, in one-letter code: Proteasome subunit alpha (246 aa).

This sequence belongs to the peptidase T1A family. As to quaternary structure, the 20S proteasome core is composed of 14 alpha and 14 beta subunits that assemble into four stacked heptameric rings, resulting in a barrel-shaped structure. The two inner rings, each composed of seven catalytic beta subunits, are sandwiched by two outer rings, each composed of seven alpha subunits. The catalytic chamber with the active sites is on the inside of the barrel. Has a gated structure, the ends of the cylinder being occluded by the N-termini of the alpha-subunits. Is capped at one or both ends by the proteasome regulatory ATPase, PAN.

It localises to the cytoplasm. Its activity is regulated as follows. The formation of the proteasomal ATPase PAN-20S proteasome complex, via the docking of the C-termini of PAN into the intersubunit pockets in the alpha-rings, triggers opening of the gate for substrate entry. Interconversion between the open-gate and close-gate conformations leads to a dynamic regulation of the 20S proteasome proteolysis activity. Component of the proteasome core, a large protease complex with broad specificity involved in protein degradation. This is Proteasome subunit alpha from Methanopyrus kandleri (strain AV19 / DSM 6324 / JCM 9639 / NBRC 100938).